The sequence spans 455 residues: Neuronal acetylcholine receptor subunit beta-3 (455 aa).

Residues 1–20 form the signal peptide; that stretch reads MLCLMLCVLCWSRSDVAALG. Over 21–229 the chain is Extracellular; it reads SVVENEDALL…VTYSFVLRRL (209 aa). Asn48 and Asn163 each carry an N-linked (GlcNAc...) asparagine glycan. An intrachain disulfide couples Cys150 to Cys164. The next 3 membrane-spanning stretches (helical) occupy residues 230 to 254, 262 to 279, and 296 to 317; these read PLFY…VFYL, LSLS…LLVI, and YLLF…VINV. At 318-425 the chain is on the cytoplasmic side; it reads HHRSSATYHP…WKFVAQVLDR (108 aa). Residues 426–444 form a helical membrane-spanning segment; it reads IFLWLFLVVSVTGSVLIFT.

It belongs to the ligand-gated ion channel (TC 1.A.9) family. Acetylcholine receptor (TC 1.A.9.1) subfamily. Beta-3/CHRNB3 sub-subfamily. In terms of assembly, neuronal AChR seems to be composed of two different type of subunits: alpha and beta. CHRNB3/beta-3 subunit is only able to form functional nAChRs when co-assembled with another beta subunit. Participates in pentameric assemblies along with CHRNA4/alpha-4 and CHRNB2/beta-2 subunits and with CHRNA6/alpha-6 as well, forming stoichiometries such as (CHRNA3:CHRNB4)2:CHRNB3, (CHRNA4:CHRNB2)2:CHRNB3 or (CHRNA6:CHRNB2)2:CHRNB3. In terms of tissue distribution, relatively abundant in the developing retina and in the trigeminal ganglion.

It is found in the synaptic cell membrane. The protein resides in the cell membrane. It catalyses the reaction Ca(2+)(in) = Ca(2+)(out). The catalysed reaction is K(+)(in) = K(+)(out). The enzyme catalyses Na(+)(in) = Na(+)(out). Activated by a myriad of ligands such as acetylcholine, cytisine, nicotine, choline and epibatidine. Functionally, component of neuronal acetylcholine receptors (nAChRs) that function as pentameric, ligand-gated cation channels with high calcium permeability among other activities. nAChRs are excitatory neurotrasnmitter receptors formed by a collection of nAChR subunits known to mediate synaptic transmission in the nervous system and the neuromuscular junction. Each nAchR subunit confers differential attributes to channel properties, including activation, deactivation and desensitization kinetics, pH sensitivity, cation permeability, and binding to allosteric modulators. Has an accessory rather than functional role and is only able to form functional nAChRs when co-assembled with another beta subunit. Participates in pentameric assemblies along with CHRNA3, CHRNA4, CHRNA6, CHRNB2 and CHRNB4. Modulates receptor assembly and increases receptor sensitivity to nicotine when associated with CHRNB2, CHRNA4 and/or CHRNA6 as well as CHRNA3 and CHRNB4. Seems to play a role in nicotine addiction. This is Neuronal acetylcholine receptor subunit beta-3 (CHRNB3) from Gallus gallus (Chicken).